The primary structure comprises 472 residues: MARVSSLLSFCLTLLILFHGYAAQQGQQGQQFPNECQLDQLNALEPSHVLKSEAGRIEVWDHHAPQLRCSGVSFARYIIESKGLYLPSFFNTAKLSFVAKGRGLMGKVIPGCAETFQDSSEFQPRFEGQGQSQRFRDMHQKVEHIRSGDTIATTPGVAQWFYNDGQEPLVIVSVFDLASHQNQLDRNPRPFYLAGNNPQGQVWLQGREQQPQKNIFNGFGPEVIAQALKIDLQTAQQLQNQDDNRGNIVRVQGPFGVIRPPLRGQRPQEEEEEEGRHGRHGNGLEETICSARCTDNLDDPSRADVYKPQLGYISTLNSYDLPILRFIRLSALRGSIRQNAMVLPQWNANANAILYVTDGEAQIQIVNDNGNRVFDGQVSQGQLIAVPQGFSVVKRATSNRFQWVEFKTNANAQINTLAGRTSVLRGLPLEVITNGFQISPEEARRVKFNTLETTLTHSSGPASYGRPRVAAA.

A signal peptide spans 1–24; it reads MARVSSLLSFCLTLLILFHGYAAQ. 2 disulfide bridges follow: C36/C69 and C112/C289. In terms of domain architecture, Cupin type-1 1 spans 41–236; it reads LNALEPSHVL…ALKIDLQTAQ (196 aa). T115 is modified (phosphothreonine). The interval 259-283 is disordered; the sequence is RPPLRGQRPQEEEEEEGRHGRHGNG. Positions 295 to 444 constitute a Cupin type-1 2 domain; it reads DNLDDPSRAD…GFQISPEEAR (150 aa). Y312 bears the Phosphotyrosine mark. At S314 the chain carries Phosphoserine. A phosphothreonine mark is found at T408 and T433.

It belongs to the 11S seed storage protein (globulins) family. As to quaternary structure, hexamer; each subunit is composed of an acidic and a basic chain derived from a single precursor and linked by a disulfide bond. Post-translationally, phosphorylated in seeds on some Tyr residues in response to abscisic acid (ABA). In terms of processing, proteolytically processed during seed maturation at a conserved Asn-Gly peptide bond by an asparaginyl endopeptidase to produce two mature polypeptides referred to as alpha and beta subunits that are joined together by a disulfide bond. As to expression, accumulates in seeds 8 days after anthesis.

It localises to the protein storage vacuole. In terms of biological role, seed storage protein. This is 12S seed storage protein CRA1 (CRA1) from Arabidopsis thaliana (Mouse-ear cress).